A 485-amino-acid polypeptide reads, in one-letter code: Taxane 13-alpha-hydroxylase (485 aa).

Residue Cys431 coordinates heme.

This sequence belongs to the cytochrome P450 family. Heme serves as cofactor.

The enzyme catalyses taxa-4(20),11-dien-5alpha-ol + reduced [NADPH--hemoprotein reductase] + O2 = taxa-4(20),11-dien-5alpha,13alpha-diol + oxidized [NADPH--hemoprotein reductase] + H2O + H(+). It participates in alkaloid biosynthesis; taxol biosynthesis. Functionally, involved in the transformation of a taxadienyl acetate by hydroxylation at C13 to yield taxadien-5-alpha-acetoxy-13-alpha-ol. This is Taxane 13-alpha-hydroxylase (CYP725A2) from Taxus cuspidata (Japanese yew).